A 160-amino-acid polypeptide reads, in one-letter code: RNA pyrophosphohydrolase (160 aa).

In terms of domain architecture, Nudix hydrolase spans 10 to 154 (PYRKCVGVVL…KRDVYEQVFD (145 aa)). A Nudix box motif is present at residues 44–65 (GGIEDGEDARTAALRELVEETG).

It belongs to the Nudix hydrolase family. RppH subfamily. Requires a divalent metal cation as cofactor.

Functionally, accelerates the degradation of transcripts by removing pyrophosphate from the 5'-end of triphosphorylated RNA, leading to a more labile monophosphorylated state that can stimulate subsequent ribonuclease cleavage. The chain is RNA pyrophosphohydrolase from Dinoroseobacter shibae (strain DSM 16493 / NCIMB 14021 / DFL 12).